Consider the following 286-residue polypeptide: Eukaryotic translation initiation factor 3 subunit J (286 aa).

3 disordered regions span residues Met1–Asp35, Ala141–Phe162, and Lys229–Thr258. Acidic residues predominate over residues Trp21–Asp35. Residues Asp35–Lys75 adopt a coiled-coil conformation.

This sequence belongs to the eIF-3 subunit J family. Component of the eukaryotic translation initiation factor 3 (eIF-3) complex.

The protein resides in the cytoplasm. In terms of biological role, component of the eukaryotic translation initiation factor 3 (eIF-3) complex, which is involved in protein synthesis of a specialized repertoire of mRNAs and, together with other initiation factors, stimulates binding of mRNA and methionyl-tRNAi to the 40S ribosome. The eIF-3 complex specifically targets and initiates translation of a subset of mRNAs involved in cell proliferation. This Debaryomyces hansenii (strain ATCC 36239 / CBS 767 / BCRC 21394 / JCM 1990 / NBRC 0083 / IGC 2968) (Yeast) protein is Eukaryotic translation initiation factor 3 subunit J.